The chain runs to 221 residues: Thiopurine S-methyltransferase (221 aa).

S-adenosyl-L-methionine is bound by residues tryptophan 12, leucine 47, glutamate 68, and arginine 125.

Belongs to the class I-like SAM-binding methyltransferase superfamily. TPMT family.

The protein resides in the cytoplasm. It carries out the reaction S-adenosyl-L-methionine + a thiopurine = S-adenosyl-L-homocysteine + a thiopurine S-methylether.. The protein is Thiopurine S-methyltransferase of Legionella pneumophila (strain Paris).